Consider the following 330-residue polypeptide: Probable inactive heme oxygenase 2, chloroplastic (330 aa).

Low complexity-rich tracts occupy residues 1 to 13 (MPLAAAVAASAVV) and 56 to 69 (AAEAEAEAVAVDEA). Disordered regions lie at residues 1–27 (MPLAAAVAASAVVPPRPPPPPPRRARP), 50–82 (PSPPAPAAEAEAEAVAVDEAPPAKPRPRRYPRQ), and 107–156 (TTLK…LEGE). A chloroplast-targeting transit peptide spans 1 to 47 (MPLAAAVAASAVVPPRPPPPPPRRARPLRSFTGLILTRDLAALTVAR). The span at 114 to 151 (TGAEEEVGDGVSEDASASEEEEEEEDDDDVVEEEEEGA) shows a compositional bias: acidic residues.

It belongs to the heme oxygenase family.

It is found in the plastid. The protein resides in the chloroplast. Probable inactive heme oxygenase that may play a role in the regulation of phytochrome assembly and photomorphogenesis. The sequence is that of Probable inactive heme oxygenase 2, chloroplastic (HO2) from Oryza sativa subsp. japonica (Rice).